Here is a 171-residue protein sequence, read N- to C-terminus: 3-hydroxydecanoyl-[acyl-carrier-protein] dehydratase (171 aa).

His70 is an active-site residue.

It belongs to the thioester dehydratase family. FabA subfamily. Homodimer.

The protein resides in the cytoplasm. It carries out the reaction a (3R)-hydroxyacyl-[ACP] = a (2E)-enoyl-[ACP] + H2O. The catalysed reaction is (3R)-hydroxydecanoyl-[ACP] = (2E)-decenoyl-[ACP] + H2O. It catalyses the reaction (2E)-decenoyl-[ACP] = (3Z)-decenoyl-[ACP]. The protein operates within lipid metabolism; fatty acid biosynthesis. Its function is as follows. Necessary for the introduction of cis unsaturation into fatty acids. Catalyzes the dehydration of (3R)-3-hydroxydecanoyl-ACP to E-(2)-decenoyl-ACP and then its isomerization to Z-(3)-decenoyl-ACP. Can catalyze the dehydratase reaction for beta-hydroxyacyl-ACPs with saturated chain lengths up to 16:0, being most active on intermediate chain length. This Shewanella baltica (strain OS223) protein is 3-hydroxydecanoyl-[acyl-carrier-protein] dehydratase.